Here is a 1448-residue protein sequence, read N- to C-terminus: Sister chromatid cohesion protein PDS5 homolog B-A (1448 aa).

One copy of the HEAT repeat lies at 383 to 419 (LLVNDQLLNFVRERTLDKRWRVRKEAMMGLAQIYKKY). Positions 1141–1155 (AGKQMLSKSSRMETV) are enriched in polar residues. Residues 1141 to 1448 (AGKQMLSKSS…TGRLRSAKKR (308 aa)) are disordered. Positions 1156–1168 (SNASSGSNPSSPG) are enriched in low complexity. A compositionally biased stretch (acidic residues) spans 1177 to 1186 (MELDQSENED). Composition is skewed to basic and acidic residues over residues 1196 to 1214 (KKSD…LEKP), 1233 to 1243 (ELSKPAQEPKS), and 1264 to 1273 (WQEKRLKEDL). Positions 1285-1294 (KKGRRGRPPK) are enriched in basic residues. A DNA-binding region (a.T hook 1) is located at residues 1286–1298 (KGRRGRPPKSAKM). Over residues 1324-1341 (PTDEDDHLEISEEQDFEN) the composition is skewed to acidic residues. Positions 1346 to 1356 (RKGRGSSRRTP) are enriched in basic residues. 2 consecutive DNA-binding regions (a.T hook) follow at residues 1374–1386 (QKRR…TPTV) and 1390–1402 (KSHV…VVSK). The span at 1389–1399 (KKSHVGRPRKV) shows a compositional bias: basic residues.

Belongs to the PDS5 family. Interacts with the cohesin complex. In terms of processing, phosphorylated in mitotic cells.

The protein localises to the nucleus. Plays a role in androgen-induced proliferative arrest. Required for maintenance of sister chromatid cohesion during mitosis. In Xenopus laevis (African clawed frog), this protein is Sister chromatid cohesion protein PDS5 homolog B-A (pds5b-a).